A 418-amino-acid polypeptide reads, in one-letter code: Voltage-gated ClC-type chloride channel ClcB (418 aa).

Residues 1–4 lie on the Cytoplasmic side of the membrane; it reads MFRR. The chain crosses the membrane as a helical span at residues 5–25; sequence LLIATVVGILAAFAVAGFRHA. At 26 to 53 the chain is on the periplasmic side; it reads MLLLEWLFLNNDSGSLVNAATNLSPWRR. A helical transmembrane segment spans residues 54 to 74; sequence LLTPALGGLAAGLLLMGWQKF. Topologically, residues 75 to 145 are cytoplasmic; it reads TQQRPHAPTD…QRFTPRQEWK (71 aa). Residues 146–166 traverse the membrane as a helical segment; it reads LWIACGAAAGMAAAYRAPLAG. The Periplasmic portion of the chain corresponds to 167–177; it reads SLFIAEVLFGT. Residues 178–200 traverse the membrane as a helical segment; it reads MMLASLGPVIISAVVALLVSNLI. The Cytoplasmic segment spans residues 201–221; it reads NHSDALLYSVQLSVTVQARDY. A helical membrane pass occupies residues 222–242; it reads ALIISTGVLAGLCGPLLLTLM. Residues 243 to 257 are Periplasmic-facing; that stretch reads NACHRGFVSLKLAPP. The chain crosses the membrane as a helical span at residues 258–278; that stretch reads WQLALGGLIVGLLSLFTPAVW. Residues 279 to 290 lie on the Cytoplasmic side of the membrane; it reads GNGYSTVQSFLT. The chain crosses the membrane as a helical span at residues 291 to 311; that stretch reads APPLLMIIAGIFLCKLCAVLA. Residues 312 to 315 lie on the Periplasmic side of the membrane; the sequence is SSGS. A helical membrane pass occupies residues 316-336; that stretch reads GAPGGVFTPTLFIGLAIGMLY. Topologically, residues 337-351 are cytoplasmic; the sequence is GRSLGLWFPDGEEIT. Residues 352–372 form a helical membrane-spanning segment; that stretch reads LLLGLTGMATLLAATTHAPIM. The Periplasmic segment spans residues 373-379; the sequence is STLMICE. The chain crosses the membrane as a helical span at residues 380–400; that stretch reads MTGEYQLLPGLLIACVIASVI. Residues 401 to 418 lie on the Cytoplasmic side of the membrane; it reads SRTLHRDSIYRQHTAQHS.

The protein belongs to the chloride channel (TC 2.A.49) family. ClcB subfamily.

It localises to the cell inner membrane. In terms of biological role, probably acts as an electrical shunt for an outwardly-directed proton pump that is linked to amino acid decarboxylation, as part of the extreme acid resistance (XAR) response. The polypeptide is Voltage-gated ClC-type chloride channel ClcB (clcB) (Escherichia coli O157:H7).